The primary structure comprises 191 residues: Protein 2 in picA locus (191 aa).

This sequence belongs to the acyltransferase 3 family.

Its subcellular location is the cell membrane. Functionally, seems to regulate the surface properties of the bacterium in the presence of plant cells or plant cell extracts. The protein is Protein 2 in picA locus of Rhizobium radiobacter (Agrobacterium tumefaciens).